Consider the following 320-residue polypeptide: Putative cyclin-D7-1 (320 aa).

Positions Met1–Asp46 are disordered. Over residues Ser24 to Glu34 the composition is skewed to pro residues. Positions Gln35 to Pro44 are enriched in low complexity.

This sequence belongs to the cyclin family. Cyclin D subfamily.

In Oryza sativa subsp. japonica (Rice), this protein is Putative cyclin-D7-1 (CYCD7-1).